We begin with the raw amino-acid sequence, 1210 residues long: Histone-lysine N-methyltransferase EHMT2 (1210 aa).

Low complexity predominate over residues 1–23 (MAAAAGAAAAAAAEGEAPAEMGA). Disordered stretches follow at residues 1-262 (MAAA…LEEW) and 280-386 (DERV…EYME). N-acetylalanine is present on Ala2. Over residues 26–38 (LEKETRGATERVH) the composition is skewed to basic and acidic residues. Position 40 is a phosphoserine (Ser40). At Thr44 the chain carries Phosphothreonine. Phosphoserine is present on Ser47. The span at 105-128 (GRILLGHATKSFPSSPSKGGSCPS) shows a compositional bias: low complexity. A Phosphoserine modification is found at Ser140. The span at 155 to 165 (PGAQGAAAAGS) shows a compositional bias: low complexity. Position 173 is a phosphoserine (Ser173). Lys185 carries the N6,N6,N6-trimethyllysine; by EHMT2; alternate modification. Lys185 carries the N6,N6-dimethyllysine; by EHMT2; alternate modification. Basic and acidic residues predominate over residues 198–216 (PEKRPPEIQHFRMSDDVHS). Residues Lys219 and Lys229 each participate in a glycyl lysine isopeptide (Lys-Gly) (interchain with G-Cter in SUMO2) cross-link. 3 positions are modified to phosphoserine: Ser232, Ser242, and Ser246. A compositionally biased stretch (basic and acidic residues) spans 280 to 291 (DERVDSDSKSEV). Over residues 298–327 (LSEEEEEEEEEEEEEEEEEEEEEEEEDEES) the composition is skewed to acidic residues. Positions 338 to 347 (GRRKAKKKWR) are enriched in basic residues. Phosphoserine occurs at positions 350, 412, and 413. The tract at residues 548–608 (IPRGDGVTPP…LADTIDSSGP (61 aa)) is disordered. Phosphothreonine is present on Thr555. Ser569 bears the Phosphoserine mark. Lys634 is covalently cross-linked (Glycyl lysine isopeptide (Lys-Gly) (interchain with G-Cter in SUMO2)). ANK repeat units follow at residues 649–678 (FHPR…DPNF), 684–713 (SKRT…NINA), 717–746 (QQRT…CVYS), 750–780 (DGST…DVNA), 784–813 (GGWT…DVTL), 817–846 (EENI…DLHA), and 850–879 (HGDT…NPEL). Positions 817-819 (EEN) are histone H3K9me binding. Positions 972-1035 (QHCTCVDDCS…NCKNRVVQSG (64 aa)) constitute a Pre-SET domain. Residues Cys974, Cys976, Cys980, Cys985, Cys987, Cys1017, Cys1021, Cys1023, and Cys1027 each contribute to the Zn(2+) site. An SET domain is found at 1038–1155 (VRLQLYRTAK…TGEELGFDYG (118 aa)). Residues 1048–1050 (MGW), Tyr1085, and 1112–1113 (NH) contribute to the S-adenosyl-L-methionine site. Positions 1074-1093 (DAEADVREDDSYLFDLDNKD) are interaction with histone H3. Zn(2+) is bound at residue Cys1115. The interval 1154 to 1157 (YGDR) is interaction with histone H3. The Post-SET domain maps to 1164-1180 (KYFTCQCGSEKCKHSAE). A Zn(2+)-binding site is contributed by Cys1168. Gln1169 provides a ligand contact to S-adenosyl-L-methionine. Zn(2+) contacts are provided by Cys1170 and Cys1175. The residue at position 1204 (Ser1204) is a Phosphoserine. Thr1210 bears the Phosphothreonine mark.

The protein belongs to the class V-like SAM-binding methyltransferase superfamily. Histone-lysine methyltransferase family. Suvar3-9 subfamily. In terms of assembly, heterodimer; heterodimerizes with EHMT1/GLP. Interacts with GFI1B and WIZ. Part of the E2F6.com-1 complex in G0 phase composed of E2F6, MGA, MAX, TFDP1, CBX3, BAT8, EHMT1, RING1, RNF2, MBLR, L3MBTL2 and YAF2. Part of a complex composed of TRIM28, HDAC1, HDAC2 and EHMT2. Interacts with UHRF1. Interacts with CDYL. Interacts with REST only in the presence of CDYL. Part of a complex containing at least CDYL, REST, WIZ, SETB1, EHMT1 and EHMT2. Interacts with PRDM9 and CDYL; interaction only takes place when PRDM9 is bound to hotspot DNA. Interacts with SMYD5. Post-translationally, methylated at Lys-185; automethylated. In terms of tissue distribution, expressed in all tissues examined, with high levels in fetal liver, thymus, lymph node, spleen and peripheral blood leukocytes and lower level in bone marrow.

Its subcellular location is the nucleus. It localises to the chromosome. The enzyme catalyses N(6)-methyl-L-lysyl(9)-[histone H3] + S-adenosyl-L-methionine = N(6),N(6)-dimethyl-L-lysyl(9)-[histone H3] + S-adenosyl-L-homocysteine + H(+). It catalyses the reaction L-lysyl(9)-[histone H3] + S-adenosyl-L-methionine = N(6)-methyl-L-lysyl(9)-[histone H3] + S-adenosyl-L-homocysteine + H(+). Functionally, histone methyltransferase that specifically mono- and dimethylates 'Lys-9' of histone H3 (H3K9me1 and H3K9me2, respectively) in euchromatin. H3K9me represents a specific tag for epigenetic transcriptional repression by recruiting HP1 proteins to methylated histones. Also mediates monomethylation of 'Lys-56' of histone H3 (H3K56me1) in G1 phase, leading to promote interaction between histone H3 and PCNA and regulating DNA replication. Also weakly methylates 'Lys-27' of histone H3 (H3K27me). Also required for DNA methylation, the histone methyltransferase activity is not required for DNA methylation, suggesting that these 2 activities function independently. Probably targeted to histone H3 by different DNA-binding proteins like E2F6, MGA, MAX and/or DP1. May also methylate histone H1. In addition to the histone methyltransferase activity, also methylates non-histone proteins: mediates dimethylation of 'Lys-373' of p53/TP53. Also methylates CDYL, WIZ, ACIN1, DNMT1, HDAC1, ERCC6, KLF12 and itself. The protein is Histone-lysine N-methyltransferase EHMT2 (EHMT2) of Homo sapiens (Human).